Consider the following 430-residue polypeptide: Serine--tRNA ligase (430 aa).

238–240 is an L-serine binding site; sequence TAE. Position 269–271 (269–271) interacts with ATP; the sequence is RRE. Glu-292 serves as a coordination point for L-serine. 356–359 contacts ATP; sequence EISS. Ser-392 lines the L-serine pocket.

It belongs to the class-II aminoacyl-tRNA synthetase family. Type-1 seryl-tRNA synthetase subfamily. Homodimer. The tRNA molecule binds across the dimer.

It is found in the cytoplasm. The enzyme catalyses tRNA(Ser) + L-serine + ATP = L-seryl-tRNA(Ser) + AMP + diphosphate + H(+). The catalysed reaction is tRNA(Sec) + L-serine + ATP = L-seryl-tRNA(Sec) + AMP + diphosphate + H(+). It functions in the pathway aminoacyl-tRNA biosynthesis; selenocysteinyl-tRNA(Sec) biosynthesis; L-seryl-tRNA(Sec) from L-serine and tRNA(Sec): step 1/1. In terms of biological role, catalyzes the attachment of serine to tRNA(Ser). Is also able to aminoacylate tRNA(Sec) with serine, to form the misacylated tRNA L-seryl-tRNA(Sec), which will be further converted into selenocysteinyl-tRNA(Sec). This chain is Serine--tRNA ligase, found in Synechocystis sp. (strain ATCC 27184 / PCC 6803 / Kazusa).